A 169-amino-acid chain; its full sequence is Crossover junction endodeoxyribonuclease RuvC (169 aa).

Residues aspartate 15, glutamate 75, and aspartate 147 contribute to the active site. Mg(2+) is bound by residues aspartate 15, glutamate 75, and aspartate 147.

This sequence belongs to the RuvC family. In terms of assembly, homodimer which binds Holliday junction (HJ) DNA. The HJ becomes 2-fold symmetrical on binding to RuvC with unstacked arms; it has a different conformation from HJ DNA in complex with RuvA. In the full resolvosome a probable DNA-RuvA(4)-RuvB(12)-RuvC(2) complex forms which resolves the HJ. Mg(2+) serves as cofactor.

Its subcellular location is the cytoplasm. It carries out the reaction Endonucleolytic cleavage at a junction such as a reciprocal single-stranded crossover between two homologous DNA duplexes (Holliday junction).. The RuvA-RuvB-RuvC complex processes Holliday junction (HJ) DNA during genetic recombination and DNA repair. Endonuclease that resolves HJ intermediates. Cleaves cruciform DNA by making single-stranded nicks across the HJ at symmetrical positions within the homologous arms, yielding a 5'-phosphate and a 3'-hydroxyl group; requires a central core of homology in the junction. The consensus cleavage sequence is 5'-(A/T)TT(C/G)-3'. Cleavage occurs on the 3'-side of the TT dinucleotide at the point of strand exchange. HJ branch migration catalyzed by RuvA-RuvB allows RuvC to scan DNA until it finds its consensus sequence, where it cleaves and resolves the cruciform DNA. This chain is Crossover junction endodeoxyribonuclease RuvC, found in Caulobacter sp. (strain K31).